Reading from the N-terminus, the 224-residue chain is N-(5'-phosphoribosyl)anthranilate isomerase (224 aa).

This sequence belongs to the TrpF family.

It catalyses the reaction N-(5-phospho-beta-D-ribosyl)anthranilate = 1-(2-carboxyphenylamino)-1-deoxy-D-ribulose 5-phosphate. Its pathway is amino-acid biosynthesis; L-tryptophan biosynthesis; L-tryptophan from chorismate: step 3/5. This chain is N-(5'-phosphoribosyl)anthranilate isomerase (TRP1), found in Saccharomyces cerevisiae (strain ATCC 204508 / S288c) (Baker's yeast).